The following is a 161-amino-acid chain: Allophycocyanin alpha chain 2 (161 aa).

Asparagine 71 is subject to N4-methylasparagine. Residue cysteine 81 coordinates (2R,3E)-phycocyanobilin.

Belongs to the phycobiliprotein family. In terms of assembly, component of the phycobilisome. Heterodimer of an alpha and a beta chain. In terms of processing, contains one covalently linked bilin chromophore.

It is found in the cellular thylakoid membrane. Functionally, light-harvesting photosynthetic bile pigment-protein from the phycobiliprotein complex. Allophycocyanin has a maximum absorption at approximately 650 nanometers. The sequence is that of Allophycocyanin alpha chain 2 (apcA2) from Microchaete diplosiphon (Fremyella diplosiphon).